Here is a 65-residue protein sequence, read N- to C-terminus: U11-theraphotoxin-Cg1b (65 aa).

The N-terminal stretch at 1–21 (MKTTILVVILGLTLLFALSAA) is a signal peptide. The propeptide occupies 22-29 (TELKDEER). Disulfide bonds link C31–C45, C38–C50, and C44–C57.

Belongs to the neurotoxin 10 (Hwtx-1) family. 32 (Jztx-16) subfamily. Expressed by the venom gland.

The protein localises to the secreted. Probable ion channel inhibitor. This Chilobrachys guangxiensis (Chinese earth tiger tarantula) protein is U11-theraphotoxin-Cg1b.